The primary structure comprises 172 residues: Stellate orphon protein at 12D (172 aa).

The protein belongs to the casein kinase 2 subunit beta family. As to quaternary structure, interacts in vitro with the casein kinase 2 alpha subunit (CkII-alpha). The relevance of such interaction is however unclear in vivo. Probably not expressed in wild-type flies. In males lacking the Y chromosome, it is testis-specific and constitutes the main component of star-shaped crystals.

In terms of biological role, unknown. In males lacking the Y chromosome, its strong overexpression leads to the appearance of proteinaceous star-shaped crystals in the primary spermatocytes causing meiotic drive, possibly by interfering with normal casein kinase 2 activity. This Drosophila melanogaster (Fruit fly) protein is Stellate orphon protein at 12D (Ste12DOR).